A 130-amino-acid polypeptide reads, in one-letter code: Ribosome-binding factor A (130 aa).

It belongs to the RbfA family. As to quaternary structure, monomer. Binds 30S ribosomal subunits, but not 50S ribosomal subunits or 70S ribosomes.

The protein resides in the cytoplasm. One of several proteins that assist in the late maturation steps of the functional core of the 30S ribosomal subunit. Associates with free 30S ribosomal subunits (but not with 30S subunits that are part of 70S ribosomes or polysomes). Required for efficient processing of 16S rRNA. May interact with the 5'-terminal helix region of 16S rRNA. In Flavobacterium psychrophilum (strain ATCC 49511 / DSM 21280 / CIP 103535 / JIP02/86), this protein is Ribosome-binding factor A.